Reading from the N-terminus, the 650-residue chain is p-hydroxybenzoic acid efflux pump subunit AaeB (650 aa).

11 helical membrane passes run 7–27 (FPIK…HLNL), 32–52 (WAVM…GGDP), 61–81 (GILR…IMIA), 87–107 (VVML…SSLI), 115–135 (LGLA…SGGL), 148–168 (EIIL…PRSI), 365–385 (LFWL…LGVI), 402–422 (FVYG…YILP), 426–446 (QSAV…GILI), 450–470 (QIGT…DNPM), and 478–498 (IDNA…ILLI).

The protein belongs to the aromatic acid exporter ArAE (TC 2.A.85) family.

The protein localises to the cell inner membrane. Functionally, forms an efflux pump with AaeA. Could function as a metabolic relief valve, allowing to eliminate certain compounds when they accumulate to high levels in the cell. This chain is p-hydroxybenzoic acid efflux pump subunit AaeB, found in Pantoea ananatis (strain LMG 20103).